The primary structure comprises 277 residues: Secoisolariciresinol dehydrogenase (277 aa).

Residues 24-29 (GGASGI), D48, V73, and N99 contribute to the NAD(+) site. S163 lines the substrate pocket. Y166 serves as the catalytic Proton donor/acceptor. An NAD(+)-binding site is contributed by K170.

It belongs to the short-chain dehydrogenases/reductases (SDR) family. As to quaternary structure, homotetramer.

The enzyme catalyses (-)-secoisolariciresinol + 2 NAD(+) = (-)-matairesinol + 2 NADH + 2 H(+). Functionally, oxidoreductase involved in lignan biosynthesis. Catalyzes the stereospecific conversion of (-)-secoisolariciresinol to (-)-matairesinol via a lactol intermediate. This Forsythia intermedia (Border forsythia) protein is Secoisolariciresinol dehydrogenase.